A 136-amino-acid chain; its full sequence is Nucleoside diphosphate kinase (136 aa).

Residues K10, F58, R86, T92, R104, and N114 each contribute to the ATP site. The Pros-phosphohistidine intermediate role is filled by H117.

The protein belongs to the NDK family. Homotetramer. The cofactor is Mg(2+).

Its subcellular location is the cytoplasm. It carries out the reaction a 2'-deoxyribonucleoside 5'-diphosphate + ATP = a 2'-deoxyribonucleoside 5'-triphosphate + ADP. It catalyses the reaction a ribonucleoside 5'-diphosphate + ATP = a ribonucleoside 5'-triphosphate + ADP. Functionally, major role in the synthesis of nucleoside triphosphates other than ATP. The ATP gamma phosphate is transferred to the NDP beta phosphate via a ping-pong mechanism, using a phosphorylated active-site intermediate. In Mycolicibacterium gilvum (strain PYR-GCK) (Mycobacterium gilvum (strain PYR-GCK)), this protein is Nucleoside diphosphate kinase.